Reading from the N-terminus, the 23-residue chain is Mu-conotoxin-like SxIIIB (23 aa).

The residue at position 1 (Gln-1) is a Pyrrolidone carboxylic acid. 3 disulfides stabilise this stretch: Cys-3-Cys-16, Cys-4-Cys-21, and Cys-11-Cys-22. Ala-23 bears the Alanine amide mark.

It belongs to the conotoxin M superfamily. Expressed by the venom duct.

The protein resides in the secreted. Its function is as follows. Mu-conotoxins block voltage-gated sodium channels (Nav). This chain is Mu-conotoxin-like SxIIIB, found in Conus striolatus (Cone snail).